Reading from the N-terminus, the 1495-residue chain is Chromosome partition protein MukB (1495 aa).

60 to 67 is an ATP binding site; it reads GGNGAGKS. Coiled coils occupy residues 322–693, 861–1140, and 1233–1289; these read RART…SQPD, EDVM…AKVS, and IDAI…LQNI. Positions 692–809 are flexible hinge; the sequence is PDGSEDARLN…EIPLFGRAAR (118 aa).

Belongs to the SMC family. MukB subfamily. Homodimerization via its hinge domain. Binds to DNA via its C-terminal region. Interacts, and probably forms a ternary complex, with MukE and MukF via its C-terminal region. The complex formation is stimulated by calcium or magnesium. Interacts with tubulin-related protein FtsZ.

It localises to the cytoplasm. Its subcellular location is the nucleoid. Plays a central role in chromosome condensation, segregation and cell cycle progression. Functions as a homodimer, which is essential for chromosome partition. Involved in negative DNA supercoiling in vivo, and by this means organize and compact chromosomes. May achieve or facilitate chromosome segregation by condensation DNA from both sides of a centrally located replisome during cell division. This Pasteurella multocida (strain Pm70) protein is Chromosome partition protein MukB.